The following is a 426-amino-acid chain: Adenylosuccinate synthetase 2 (426 aa).

Residues 12 to 18 (GDEGKGK) and 40 to 42 (GHT) contribute to the GTP site. Catalysis depends on Asp13, which acts as the Proton acceptor. Mg(2+) contacts are provided by Asp13 and Gly40. Residues 13 to 16 (DEGK), 38 to 41 (NAGH), Arg147, Asn223, Thr238, and Arg302 each bind IMP. Catalysis depends on His41, which acts as the Proton donor. 298–304 (TNTGRRR) contacts substrate. Residues Arg304, 330 to 332 (KLD), and 412 to 414 (GVG) contribute to the GTP site.

It belongs to the adenylosuccinate synthetase family. Homodimer. The cofactor is Mg(2+).

Its subcellular location is the cytoplasm. It carries out the reaction IMP + L-aspartate + GTP = N(6)-(1,2-dicarboxyethyl)-AMP + GDP + phosphate + 2 H(+). It functions in the pathway purine metabolism; AMP biosynthesis via de novo pathway; AMP from IMP: step 1/2. In terms of biological role, plays an important role in the de novo pathway and in the salvage pathway of purine nucleotide biosynthesis. Catalyzes the first committed step in the biosynthesis of AMP from IMP. The polypeptide is Adenylosuccinate synthetase 2 (Laccaria bicolor (strain S238N-H82 / ATCC MYA-4686) (Bicoloured deceiver)).